A 271-amino-acid polypeptide reads, in one-letter code: uncharacterized protein (271 aa).

This is an uncharacterized protein from Galliformes (FAdV-1).